The chain runs to 259 residues: Methyltransferase afvD (259 aa).

It belongs to the class I-like SAM-binding methyltransferase superfamily.

It participates in secondary metabolite biosynthesis. Its function is as follows. Methyltransferase; part of the gene cluster that mediates the biosynthesis of aflavarin, a bicoumarin that exhibits anti-insectan activity against the fungivorous beetle C.hemipterus. This is Methyltransferase afvD from Aspergillus flavus (strain ATCC 200026 / FGSC A1120 / IAM 13836 / NRRL 3357 / JCM 12722 / SRRC 167).